We begin with the raw amino-acid sequence, 207 residues long: Protein FAM177A1 (207 aa).

Met1 carries the N-acetylmethionine modification. Ser65 bears the Phosphoserine mark. Thr66 is subject to Phosphothreonine. The stretch at 131-170 (IDEYYRMKKEEEEEEEENRMSEEAERQYQQNKLQADSIVQ) forms a coiled coil. Residues 142–176 (EEEEEENRMSEEAERQYQQNKLQADSIVQTDQPET) are disordered. The span at 157-176 (QYQQNKLQADSIVQTDQPET) shows a compositional bias: polar residues.

Belongs to the FAM177 family.

The sequence is that of Protein FAM177A1 (Fam177a1) from Mus musculus (Mouse).